Here is a 432-residue protein sequence, read N- to C-terminus: Adenylosuccinate synthetase (432 aa).

GTP-binding positions include 13–19 (GDEGKGK) and 41–43 (GHT). The Proton acceptor role is filled by D14. Mg(2+) is bound by residues D14 and G41. Residues 14 to 17 (DEGK), 39 to 42 (NAGH), T130, R144, Q225, T240, and R304 each bind IMP. The Proton donor role is filled by H42. A substrate-binding site is contributed by 300–306 (AVTGRPR). GTP contacts are provided by residues R306, 332-334 (KLD), and 415-417 (STG).

This sequence belongs to the adenylosuccinate synthetase family. In terms of assembly, homodimer. The cofactor is Mg(2+).

The protein resides in the cytoplasm. The enzyme catalyses IMP + L-aspartate + GTP = N(6)-(1,2-dicarboxyethyl)-AMP + GDP + phosphate + 2 H(+). Its pathway is purine metabolism; AMP biosynthesis via de novo pathway; AMP from IMP: step 1/2. Functionally, plays an important role in the de novo pathway of purine nucleotide biosynthesis. Catalyzes the first committed step in the biosynthesis of AMP from IMP. The sequence is that of Adenylosuccinate synthetase from Actinobacillus succinogenes (strain ATCC 55618 / DSM 22257 / CCUG 43843 / 130Z).